The sequence spans 325 residues: Tagatose 1,6-diphosphate aldolase 1 (325 aa).

Belongs to the aldolase LacD family.

It catalyses the reaction D-tagatofuranose 1,6-bisphosphate = D-glyceraldehyde 3-phosphate + dihydroxyacetone phosphate. It functions in the pathway carbohydrate metabolism; D-tagatose 6-phosphate degradation; D-glyceraldehyde 3-phosphate and glycerone phosphate from D-tagatose 6-phosphate: step 2/2. This Streptococcus pyogenes serotype M1 protein is Tagatose 1,6-diphosphate aldolase 1 (lacD1).